The following is a 280-amino-acid chain: Phospholipase C D (280 aa).

The segment at 258–280 (VPDPQIMPTQETTPTRGIPSGPC) is disordered.

It belongs to the bacterial phospholipase C family.

Its subcellular location is the secreted. The protein resides in the cell wall. The catalysed reaction is a 1,2-diacyl-sn-glycero-3-phosphocholine + H2O = phosphocholine + a 1,2-diacyl-sn-glycerol + H(+). It catalyses the reaction 1,2-dihexadecanoyl-sn-glycero-3-phosphocholine + H2O = 1,2-dihexadecanoyl-sn-glycerol + phosphocholine + H(+). Its function is as follows. Involved in virulence. Induces cytotoxic effects on mouse macrophage cell lines, via direct or indirect enzymatic hydrolysis of cell membrane phospholipids. Hydrolyzes phosphatidylcholine. Does not have hemolytic activity. This chain is Phospholipase C D, found in Mycobacterium tuberculosis (strain ATCC 25618 / H37Rv).